Consider the following 119-residue polypeptide: LESQNIRDYTEQTHDKEDKSTEFDFHFTLNGKTYGLSAKRTVRERYKQFIKTSQMSQLDIMIDVTLGIDITEDKLKNIRQHGVYVFVADEVYNESPFMKKNEGIFPATQFTKETLSNLE.

This is an uncharacterized protein from Dactylococcopsis salina (Myxobaktron salinum).